We begin with the raw amino-acid sequence, 150 residues long: D-aminoacyl-tRNA deacylase (150 aa).

The Gly-cisPro motif, important for rejection of L-amino acids motif lies at 140-141; it reads GP.

Belongs to the DTD family. In terms of assembly, homodimer.

It is found in the cytoplasm. It carries out the reaction glycyl-tRNA(Ala) + H2O = tRNA(Ala) + glycine + H(+). The catalysed reaction is a D-aminoacyl-tRNA + H2O = a tRNA + a D-alpha-amino acid + H(+). An aminoacyl-tRNA editing enzyme that deacylates mischarged D-aminoacyl-tRNAs. Also deacylates mischarged glycyl-tRNA(Ala), protecting cells against glycine mischarging by AlaRS. Acts via tRNA-based rather than protein-based catalysis; rejects L-amino acids rather than detecting D-amino acids in the active site. By recycling D-aminoacyl-tRNA to D-amino acids and free tRNA molecules, this enzyme counteracts the toxicity associated with the formation of D-aminoacyl-tRNA entities in vivo and helps enforce protein L-homochirality. The polypeptide is D-aminoacyl-tRNA deacylase (DTD1) (Eremothecium gossypii (strain ATCC 10895 / CBS 109.51 / FGSC 9923 / NRRL Y-1056) (Yeast)).